The chain runs to 360 residues: Peptide chain release factor 1 (360 aa).

Q237 carries the post-translational modification N5-methylglutamine.

It belongs to the prokaryotic/mitochondrial release factor family. Post-translationally, methylated by PrmC. Methylation increases the termination efficiency of RF1.

It is found in the cytoplasm. Functionally, peptide chain release factor 1 directs the termination of translation in response to the peptide chain termination codons UAG and UAA. This chain is Peptide chain release factor 1, found in Pseudomonas fluorescens (strain SBW25).